The chain runs to 488 residues: MGPLKLNTANLSQIVAAGAGRVKVPTYRRGPALKEGIVHVGVGGFHRAHLAVYVDQLMQNHGVTDYAICGVGLQPFDSAMRDALSSQDNLYTVIERSAKGSFANVIGSINSYLFAPDDREAVIAKMAHPDTRIVSLTITESGYYYNENTHELQSEHPDIQFDLDPANEKTPRTTFGFLYAALARRHQQEEWFHHPSHARVFRPSPHPEVAQWITDKGAFPNAMVDRITPQTSPADKESLANTMGIEDSWPVVTEPFMQWVIEDQFSDGRPPFEKVGVQVVKDVHAVEEFEKHKLRLLNGSHSAIGYPGQMAGFNYVHEVLENPDFNKFVWQMMQEEVKPSLPEIPGVDIDQYCKTLMERFSNPTIMDQLPRICLNASGKIPQFIMPSIAEAIWVKGPLRRLCFVAAAWFRYINGVDDQGNTFTVDDPMREELQAKARAGGTKPSELLSITSLFGDDLRNDKRFMQEITNAMEDIARDGILKTLPKYID.

Isoleucine 37–alanine 48 serves as a coordination point for NAD(+).

The protein belongs to the mannitol dehydrogenase family. As to quaternary structure, monomer.

The enzyme catalyses D-mannitol + NAD(+) = D-fructose + NADH + H(+). Functionally, catalyzes the NAD(H)-dependent interconversion of D-fructose and D-mannitol in the mannitol metabolic pathway. This chain is Mannitol 2-dehydrogenase, found in Aspergillus niger (strain ATCC MYA-4892 / CBS 513.88 / FGSC A1513).